A 103-amino-acid polypeptide reads, in one-letter code: MIAKDKIRVRLFSFDVKILDQSAESIVKAVQKAKAQIKGPIPLPTKIKKYTVLRSPHVNKKSREQFEMRTHKRLIDILEPTSALMDSLMKLELPAGVEVDIKQ.

It belongs to the universal ribosomal protein uS10 family. Part of the 30S ribosomal subunit.

In terms of biological role, involved in the binding of tRNA to the ribosomes. This chain is Small ribosomal subunit protein uS10, found in Borreliella burgdorferi (strain ATCC 35210 / DSM 4680 / CIP 102532 / B31) (Borrelia burgdorferi).